A 428-amino-acid chain; its full sequence is MEQSFMQSAMAMGAQSKKGFSRSIAVERKNLITVCRFSVKTLLEKYTAEPIDDSSEEFINFAAILEHILSHRFKGSGSWFDGQRSFWDFIRLACSKVPNNCISSIENMENINSSRAKGRAWLRVALMEKRLSEYIATALRDSRTTRRFYDEGAIMLREEATVLTGMLIGLGAIDFSFCLKGEALDGKSEAVIDYTPYLKFTQSYDYLSDDEDGQSVDSSNSDDSVEHPYIPLVTDEESWRNKCRKMEQRFKIVNAQKGYLEELVRLRESQLKNVEMENKKLTAGLEELQQQSQKEKRELENIILELQEQLTSLIPGESHPLSKDLSIPLVNQWPSLQNYNNQEDSKLYHRGSFPSPEPHISLTTGSQRTERKQNGKSWCTAEKDYTPSMLGLCGSMSSLPSCKSLPSLRSTECLVNISAEPSPALTPS.

Residues 52–182 (DDSSEEFINF…IDFSFCLKGE (131 aa)) enclose the RUN domain. Residues 237-314 (ESWRNKCRKM…ELQEQLTSLI (78 aa)) adopt a coiled-coil conformation. The segment at 349 to 375 (HRGSFPSPEPHISLTTGSQRTERKQNG) is disordered.

It belongs to the RUNDC3 family.

This Danio rerio (Zebrafish) protein is RUN domain-containing protein 3A (rundc3a).